The chain runs to 231 residues: Flagellar L-ring protein (231 aa).

The signal sequence occupies residues 1–18 (MNRLMIVSLLGIATVLGG). Cysteine 19 carries the N-palmitoyl cysteine lipid modification. Cysteine 19 carries the S-diacylglycerol cysteine lipid modification. The segment at 118-141 (LSLSAEYGGSRDAKGDSQAGQSNS) is disordered.

Belongs to the FlgH family. The basal body constitutes a major portion of the flagellar organelle and consists of four rings (L,P,S, and M) mounted on a central rod.

The protein resides in the cell outer membrane. It localises to the bacterial flagellum basal body. Assembles around the rod to form the L-ring and probably protects the motor/basal body from shearing forces during rotation. This chain is Flagellar L-ring protein, found in Pseudomonas paraeruginosa (strain DSM 24068 / PA7) (Pseudomonas aeruginosa (strain PA7)).